A 117-amino-acid chain; its full sequence is Gamma-aminobutyric acid receptor-associated protein (117 aa).

An interaction with beta-tubulin region spans residues 1–22 (MKFVYKEEHPFEKRRSEGEKIR). The segment at 36–68 (APKARIGDLDKKKYLVPSDLTVGQFYFLIRKRI) is interaction with GABRG2. Positions 36–117 (APKARIGDLD…AYSDESVYGL (82 aa)) are interaction with GPHN. The segment at 48-50 (KYL) is interaction with LIR (LC3 nteracting Region) motif of ATG3. A lipid anchor (Phosphatidylethanolamine amidated glycine; alternate) is attached at G116. A lipid anchor (Phosphatidylserine amidated glycine; alternate) is attached at G116. L117 is a propeptide (removed in mature form).

This sequence belongs to the ATG8 family. In terms of assembly, interacts with GPHN and NSF. Interacts with ATG3, ATG7 and ATG13. Interacts with alpha-tubulin. Interacts with beta-tubulin. Interacts with GABRG2. Interacts with RB1CC1. Interacts with ULK1. Interacts with CALR. Interacts with DDX47. Interacts with TP53INP1 and TP53INP2. Interacts with TBC1D5. Interacts with TBC1D25. Directly interacts with SQSTM1. Interacts with MAPK15. Interacts with TECPR2. Interacts with PCM1. Interacts with TRIM5 and TRIM21. Interacts with MEFV. Interacts with KIF21B. Interacts with WDFY3; this interaction is required for WDFY3 recruitment to MAP1LC3B-positive p62/SQSTM1 bodies. Interacts with FLCN; interaction regulates autophagy. Interacts with UBA5. Interacts with KBTBD6 and KBTBD7; the interaction is direct and required for the ubiquitination of TIAM1. Interacts with reticulophagy regulators RETREG1, RETREG2 and RETREG3. Interacts with IRGM. Interacts with STX17. Interacts with CT55; this interaction may be important for GABARAP protein stability. Interacts with DNM2. Interacts with NCOA4 (via C-terminus). In terms of processing, the precursor molecule is cleaved by ATG4 (ATG4A, ATG4B, ATG4C or ATG4D) to expose the glycine at the C-terminus and form the cytosolic form, GABARAP-I. The processed form is then activated by APG7L/ATG7, transferred to ATG3 and conjugated to phosphatidylethanolamine (PE) phospholipid to form the membrane-bound form, GABARAP-II. During non-canonical autophagy, the processed form is conjugated to phosphatidylserine (PS) phospholipid. ATG4 proteins also mediate the delipidation of PE-conjugated forms. In addition, ATG4B and ATG4D mediate delipidation of ATG8 proteins conjugated to PS during non-canonical autophagy. ATG4B constitutes the major protein for proteolytic activation. ATG4D is the main enzyme for delipidation activity. Expressed in brain (at protein level). Can be found in both somatodendritic and axonal compartment of neurons.

It is found in the cytoplasmic vesicle. It localises to the autophagosome membrane. The protein resides in the endomembrane system. Its subcellular location is the cytoplasm. The protein localises to the cytoskeleton. It is found in the golgi apparatus membrane. Ubiquitin-like modifier that plays a role in intracellular transport of GABA(A) receptors and its interaction with the cytoskeleton. Involved in autophagy: while LC3s are involved in elongation of the phagophore membrane, the GABARAP/GATE-16 subfamily is essential for a later stage in autophagosome maturation. Through its interaction with the reticulophagy receptor TEX264, participates in the remodeling of subdomains of the endoplasmic reticulum into autophagosomes upon nutrient stress, which then fuse with lysosomes for endoplasmic reticulum turnover. Also required for the local activation of the CUL3(KBTBD6/7) E3 ubiquitin ligase complex, regulating ubiquitination a nd degradation of TIAM1, a guanyl-nucleotide exchange factor (GEF) that activates RAC1 and downstream signal transduction. Thereby, regulates different biological processes including the organization of the cytoskeleton, cell migration and proliferation. Involved in apoptosis. The sequence is that of Gamma-aminobutyric acid receptor-associated protein from Rattus norvegicus (Rat).